A 370-amino-acid chain; its full sequence is Ubiquitin-binding protein Rv1468c (370 aa).

The tract at residues 1–72 (MSFVVANTEF…QVLSAQAAAF (72 aa)) is UBA. The PE domain occupies 1–93 (MSFVVANTEF…AQAYAAAEAT (93 aa)).

The protein belongs to the mycobacterial PE family. PGRS subfamily. Interacts directly with host polyubiquitin in a UBA-dependent manner.

It is found in the secreted. The protein localises to the cell wall. The protein resides in the cell surface. Mediates direct binding of host ubiquitin (Ub) to the mycobacterial surface, which triggers host xenophagy. Interaction between Rv1468c and ubiquitin recruits autophagy receptor p62 to deliver mycobacteria into LC3-associated autophagosomes. It could be a viable evolutionary strategy adopted by M.tuberculosis to maintain long-term intracellular survival through self-controlling its intracellular bacterial loads to avoid excessive host inflammatory immune responses. This is Ubiquitin-binding protein Rv1468c from Mycobacterium tuberculosis (strain ATCC 25618 / H37Rv).